The sequence spans 541 residues: MSNTVVTGEVLDKSIREVVRILEDAVGCTAGPKGLTVAISKPYGSPEITKDGYKVMKSIKPEEPLAAAIASIITQSASQCNDKVGDGTTTCSILTAKVIEEVSKAKAAGSDIVSIKNGILKAKEAVLTALMSMRREVEEDEIAQVATLSANGDKNIGSKIAQCVKEVGKDGVITVEESKGFKDLEVEKTDGMQFDRGYLSPYFVTNAEKMLVEFENPYIFLTEKKINLVQSILPILENVARSGRPLLIIAEDVEGEALSTLVLNKLRGGLQVAAVKAPGFGDRRKDMLGDIAVIVGAKYVVNDELAVKMEDIALSDLGTAKSVRITKDATTIIGSVDSSSESIASRTNQIKAQIENSSSDYDKEKLRERLAKLSGGVAVLKVGGSSEVEVKERKDRVEDALHATRAAVEEGVVPGGGAALLYALSSLDGLKGKNDDEQWGIDIIRRAACAPIKRIIKNSGSEEAPCVIQHLLKQNDKELIYNVDTMNYANAFTSGVMDPLKVVRIAFDLAVSLAAVFMTLNAVVVDVPSKNDAAGAGAGGM.

ATP is bound by residues 29-32 (TAGP), lysine 50, 86-90 (DGTTT), glycine 416, and aspartate 498.

It belongs to the chaperonin (HSP60) family. In terms of assembly, forms a cylinder of 14 subunits composed of two heptameric rings stacked back-to-back. Interacts with the co-chaperonin GroES.

Its subcellular location is the cytoplasm. The enzyme catalyses ATP + H2O + a folded polypeptide = ADP + phosphate + an unfolded polypeptide.. Together with its co-chaperonin GroES, plays an essential role in assisting protein folding. The GroEL-GroES system forms a nano-cage that allows encapsulation of the non-native substrate proteins and provides a physical environment optimized to promote and accelerate protein folding. The sequence is that of Chaperonin GroEL from Anaplasma phagocytophilum (Ehrlichia phagocytophila).